A 117-amino-acid chain; its full sequence is Large ribosomal subunit protein uL18 (117 aa).

Belongs to the universal ribosomal protein uL18 family. As to quaternary structure, part of the 50S ribosomal subunit; part of the 5S rRNA/L5/L18/L25 subcomplex. Contacts the 5S and 23S rRNAs.

This is one of the proteins that bind and probably mediate the attachment of the 5S RNA into the large ribosomal subunit, where it forms part of the central protuberance. The sequence is that of Large ribosomal subunit protein uL18 from Vibrio proteolyticus (Aeromonas proteolytica).